Here is a 153-residue protein sequence, read N- to C-terminus: 6,7-dimethyl-8-ribityllumazine synthase (153 aa).

5-amino-6-(D-ribitylamino)uracil-binding positions include phenylalanine 22, 56 to 58, and 80 to 82; these read AFE and TVI. 85–86 lines the (2S)-2-hydroxy-3-oxobutyl phosphate pocket; sequence ST. The active-site Proton donor is the histidine 88. Residue phenylalanine 113 participates in 5-amino-6-(D-ribitylamino)uracil binding. Residue arginine 127 participates in (2S)-2-hydroxy-3-oxobutyl phosphate binding.

This sequence belongs to the DMRL synthase family. As to quaternary structure, forms an icosahedral capsid composed of 60 subunits, arranged as a dodecamer of pentamers.

It carries out the reaction (2S)-2-hydroxy-3-oxobutyl phosphate + 5-amino-6-(D-ribitylamino)uracil = 6,7-dimethyl-8-(1-D-ribityl)lumazine + phosphate + 2 H2O + H(+). It functions in the pathway cofactor biosynthesis; riboflavin biosynthesis; riboflavin from 2-hydroxy-3-oxobutyl phosphate and 5-amino-6-(D-ribitylamino)uracil: step 1/2. Its function is as follows. Catalyzes the formation of 6,7-dimethyl-8-ribityllumazine by condensation of 5-amino-6-(D-ribitylamino)uracil with 3,4-dihydroxy-2-butanone 4-phosphate. This is the penultimate step in the biosynthesis of riboflavin. This chain is 6,7-dimethyl-8-ribityllumazine synthase, found in Actinobacillus pleuropneumoniae (Haemophilus pleuropneumoniae).